A 669-amino-acid polypeptide reads, in one-letter code: Threonine--tRNA ligase (669 aa).

The TGS domain occupies 3-60 (DAQQITLLVDGEETKVTTGTTGAELFFERRDVVVARVNGELKDLDQELPEGAEVEGVT). Positions 260-566 (DHRKLGSELD…LTEHYAGAFP (307 aa)) are catalytic. Cys-365, His-416, and His-543 together coordinate Zn(2+).

Belongs to the class-II aminoacyl-tRNA synthetase family. As to quaternary structure, homodimer. The cofactor is Zn(2+).

The protein localises to the cytoplasm. It carries out the reaction tRNA(Thr) + L-threonine + ATP = L-threonyl-tRNA(Thr) + AMP + diphosphate + H(+). Functionally, catalyzes the attachment of threonine to tRNA(Thr) in a two-step reaction: L-threonine is first activated by ATP to form Thr-AMP and then transferred to the acceptor end of tRNA(Thr). Also edits incorrectly charged L-seryl-tRNA(Thr). The protein is Threonine--tRNA ligase of Pseudarthrobacter chlorophenolicus (strain ATCC 700700 / DSM 12829 / CIP 107037 / JCM 12360 / KCTC 9906 / NCIMB 13794 / A6) (Arthrobacter chlorophenolicus).